The primary structure comprises 341 residues: Lipoyl synthase (341 aa).

7 residues coordinate [4Fe-4S] cluster: Cys-85, Cys-90, Cys-96, Cys-111, Cys-115, Cys-118, and Ser-325. The Radical SAM core domain occupies 97–314 (FSGGTATFMI…AEEGYKMGFK (218 aa)).

The protein belongs to the radical SAM superfamily. Lipoyl synthase family. It depends on [4Fe-4S] cluster as a cofactor.

It is found in the cytoplasm. The enzyme catalyses [[Fe-S] cluster scaffold protein carrying a second [4Fe-4S](2+) cluster] + N(6)-octanoyl-L-lysyl-[protein] + 2 oxidized [2Fe-2S]-[ferredoxin] + 2 S-adenosyl-L-methionine + 4 H(+) = [[Fe-S] cluster scaffold protein] + N(6)-[(R)-dihydrolipoyl]-L-lysyl-[protein] + 4 Fe(3+) + 2 hydrogen sulfide + 2 5'-deoxyadenosine + 2 L-methionine + 2 reduced [2Fe-2S]-[ferredoxin]. The protein operates within protein modification; protein lipoylation via endogenous pathway; protein N(6)-(lipoyl)lysine from octanoyl-[acyl-carrier-protein]: step 2/2. Catalyzes the radical-mediated insertion of two sulfur atoms into the C-6 and C-8 positions of the octanoyl moiety bound to the lipoyl domains of lipoate-dependent enzymes, thereby converting the octanoylated domains into lipoylated derivatives. This Pseudomonas fluorescens (strain SBW25) protein is Lipoyl synthase.